The chain runs to 205 residues: Small ribosomal subunit protein uS4 (205 aa).

The span at 1 to 12 (MSKRIQAKHKLD) shows a compositional bias: basic residues. The tract at residues 1–49 (MSKRIQAKHKLDRRMGQNIWGRPKSPVNRREYGPGQHGQRRKGKLSDFG) is disordered. The S4 RNA-binding domain maps to 94-156 (RRLDAVIYRA…SKQLEIVVVA (63 aa)).

Belongs to the universal ribosomal protein uS4 family. Part of the 30S ribosomal subunit. Contacts protein S5. The interaction surface between S4 and S5 is involved in control of translational fidelity.

In terms of biological role, one of the primary rRNA binding proteins, it binds directly to 16S rRNA where it nucleates assembly of the body of the 30S subunit. With S5 and S12 plays an important role in translational accuracy. In Methylobacterium nodulans (strain LMG 21967 / CNCM I-2342 / ORS 2060), this protein is Small ribosomal subunit protein uS4.